The primary structure comprises 361 residues: Alanine racemase (361 aa).

Residue Lys-34 is the Proton acceptor; specific for D-alanine of the active site. The residue at position 34 (Lys-34) is an N6-(pyridoxal phosphate)lysine. Residue Arg-129 participates in substrate binding. Catalysis depends on Tyr-256, which acts as the Proton acceptor; specific for L-alanine. Met-304 serves as a coordination point for substrate.

Belongs to the alanine racemase family. The cofactor is pyridoxal 5'-phosphate.

It catalyses the reaction L-alanine = D-alanine. It functions in the pathway amino-acid biosynthesis; D-alanine biosynthesis; D-alanine from L-alanine: step 1/1. Catalyzes the interconversion of L-alanine and D-alanine. May also act on other amino acids. In Corynebacterium glutamicum (strain R), this protein is Alanine racemase (alr).